The chain runs to 146 residues: Large ribosomal subunit protein uL15 (146 aa).

The segment at 1-54 is disordered; the sequence is MKLHELQPAAGSRKAPKRVGRGTGSGLGRNAGKGEKGQNARSGGGVRPGFEGGQ. 2 stretches are compositionally biased toward gly residues: residues 21–31 and 42–52; these read RGTGSGLGRNA and SGGGVRPGFEG.

The protein belongs to the universal ribosomal protein uL15 family. Part of the 50S ribosomal subunit.

Its function is as follows. Binds to the 23S rRNA. The chain is Large ribosomal subunit protein uL15 from Clostridium botulinum (strain Eklund 17B / Type B).